The sequence spans 246 residues: tRNA (guanine-N(1)-)-methyltransferase (246 aa).

Residues G113 and 133 to 138 contribute to the S-adenosyl-L-methionine site; that span reads IGDYVL.

It belongs to the RNA methyltransferase TrmD family. Homodimer.

The protein localises to the cytoplasm. The catalysed reaction is guanosine(37) in tRNA + S-adenosyl-L-methionine = N(1)-methylguanosine(37) in tRNA + S-adenosyl-L-homocysteine + H(+). In terms of biological role, specifically methylates guanosine-37 in various tRNAs. This is tRNA (guanine-N(1)-)-methyltransferase from Haemophilus influenzae (strain PittEE).